Consider the following 127-residue polypeptide: Glycine cleavage system H protein (127 aa).

Residues 22-103 enclose the Lipoyl-binding domain; the sequence is EAYIGITDFA…AFANWIIKVE (82 aa). Lysine 63 is subject to N6-lipoyllysine.

The protein belongs to the GcvH family. The glycine cleavage system is composed of four proteins: P, T, L and H. It depends on (R)-lipoate as a cofactor.

The glycine cleavage system catalyzes the degradation of glycine. The H protein shuttles the methylamine group of glycine from the P protein to the T protein. The chain is Glycine cleavage system H protein from Alkaliphilus oremlandii (strain OhILAs) (Clostridium oremlandii (strain OhILAs)).